Reading from the N-terminus, the 562-residue chain is Arginine--tRNA ligase (562 aa).

The 'HIGH' region signature appears at 121–131 (PNIAKPMGMGH).

Belongs to the class-I aminoacyl-tRNA synthetase family. Monomer.

The protein resides in the cytoplasm. The enzyme catalyses tRNA(Arg) + L-arginine + ATP = L-arginyl-tRNA(Arg) + AMP + diphosphate. This is Arginine--tRNA ligase from Limosilactobacillus fermentum (strain NBRC 3956 / LMG 18251) (Lactobacillus fermentum).